A 375-amino-acid polypeptide reads, in one-letter code: Protein kinase MCK1 (375 aa).

Position 2 is an N-acetylserine (Ser2). Residues Val35–Phe327 enclose the Protein kinase domain. Residues Ile41–Val49 and Lys68 each bind ATP. Asp164 functions as the Proton acceptor in the catalytic mechanism. Position 198 is a phosphoserine (Ser198). Residue Tyr199 is modified to Phosphotyrosine. Ser202 bears the Phosphoserine mark.

It belongs to the protein kinase superfamily. Ser/Thr protein kinase family. Post-translationally, phosphorylated at tyrosine and serine.

It catalyses the reaction L-seryl-[protein] + ATP = O-phospho-L-seryl-[protein] + ADP + H(+). The catalysed reaction is L-threonyl-[protein] + ATP = O-phospho-L-threonyl-[protein] + ADP + H(+). The enzyme catalyses L-tyrosyl-[protein] + ATP = O-phospho-L-tyrosyl-[protein] + ADP + H(+). Functionally, may be an autophosphorylating tyrosine kinase, a bifunctional (serine/tyrosine-specific) protein kinase, or a serine kinase that is a substrate for an associated tyrosine kinase. MCK1 is a transcriptional activator of IME1, it stimulates spore maturation, and play a positive regulatory role in both mitotic centromere function and activation of early meiotic gene expression. The protein is Protein kinase MCK1 (MCK1) of Saccharomyces cerevisiae (strain ATCC 204508 / S288c) (Baker's yeast).